The primary structure comprises 1236 residues: Chitinase-like protein PB1E7.04c (1236 aa).

An N-terminal signal peptide occupies residues 1-19 (MRLISSLLLLVYSARLALS). Residues asparagine 21, asparagine 24, asparagine 54, asparagine 123, asparagine 225, asparagine 237, asparagine 255, asparagine 267, asparagine 277, asparagine 288, and asparagine 309 are each glycosylated (N-linked (GlcNAc...) asparagine). Positions 26-325 (TAVLGYWGSN…EAIHKILDTK (300 aa)) constitute a GH18 domain. Disordered stretches follow at residues 326-367 (SKHS…TSSA), 449-497 (VSSI…QSTL), and 584-625 (TSSP…STIL). A compositionally biased stretch (polar residues) spans 339-351 (QGLESTSSIALNP). The span at 352 to 367 (TSSISSTSSSSSTSSA) shows a compositional bias: low complexity. N-linked (GlcNAc...) asparagine glycans are attached at residues asparagine 715, asparagine 737, asparagine 768, asparagine 786, and asparagine 813. 4 disordered regions span residues 804 to 836 (ISTS…LAAN), 868 to 927 (TTAL…TSSS), 946 to 979 (TPTS…SSIA), and 1125 to 1159 (AASG…TPSN). The span at 810-821 (NEYNTSFHAPTV) shows a compositional bias: polar residues. The span at 822–832 (SSTTSSSSTTS) shows a compositional bias: low complexity. A compositionally biased stretch (low complexity) spans 1125-1156 (AASGSSTVTSSATASSSSSAATTADSSVTTDT).

This sequence belongs to the glycosyl hydrolase 18 family. Chitinase class III subfamily.

It is found in the secreted. The polypeptide is Chitinase-like protein PB1E7.04c (Schizosaccharomyces pombe (strain 972 / ATCC 24843) (Fission yeast)).